We begin with the raw amino-acid sequence, 448 residues long: Phosphoglucosamine mutase (448 aa).

S100 (phosphoserine intermediate) is an active-site residue. Residues S100, D240, D242, and D244 each coordinate Mg(2+). The residue at position 100 (S100) is a Phosphoserine.

This sequence belongs to the phosphohexose mutase family. Mg(2+) is required as a cofactor. In terms of processing, activated by phosphorylation.

It carries out the reaction alpha-D-glucosamine 1-phosphate = D-glucosamine 6-phosphate. Catalyzes the conversion of glucosamine-6-phosphate to glucosamine-1-phosphate. The polypeptide is Phosphoglucosamine mutase (Bacillus cereus (strain ATCC 10987 / NRS 248)).